The sequence spans 188 residues: Calcium load-activated calcium channel (188 aa).

At 1–4 the chain is on the lumenal side; the sequence is MSTM. A helical transmembrane segment spans residues 5-32; that stretch reads FADTILIVFISICTALLAEGITWVLVYR. Positions 32-89 form a coiled coil; it reads RTDKYKRLKAEVEKQSKKLEKKKETITESAGRQQKKKIERQEEKLKNNNRDLSMVRMK. Over 33 to 86 the chain is Cytoplasmic; it reads TDKYKRLKAEVEKQSKKLEKKKETITESAGRQQKKKIERQEEKLKNNNRDLSMV. The chain crosses the membrane as a helical span at residues 87–106; the sequence is RMKSMFAIGFCFTALMGMFN. The Lumenal portion of the chain corresponds to 107-120; sequence SIFDGRVVAKLPFV. An intramembrane segment occupies 121-130; that stretch reads PLSYIQGLSH. Residues 131 to 140 lie on the Lumenal side of the membrane; that stretch reads RNLLGEDYTD. A helical transmembrane segment spans residues 141 to 162; it reads CSFIFLYILCTMSIRQNIQKML. Over 163–188 the chain is Cytoplasmic; the sequence is GLAPSRAATKQAGGFLGPPPQAAKFS.

This sequence belongs to the TMCO1 family. Homodimer and homotetramer. Component of the multi-pass translocon (MPT) complex.

The protein localises to the endoplasmic reticulum membrane. Its subcellular location is the golgi apparatus membrane. Its function is as follows. Calcium-selective channel required to prevent calcium stores from overfilling, thereby playing a key role in calcium homeostasis. In response to endoplasmic reticulum (ER) overloading, assembles into a homotetramer, forming a functional calcium-selective channel, regulating the calcium content in endoplasmic reticulum store. Component of the multi-pass translocon (MPT) complex that mediates insertion of multi-pass membrane proteins into the lipid bilayer of membranes. The sequence is that of Calcium load-activated calcium channel from Danio rerio (Zebrafish).